Reading from the N-terminus, the 218-residue chain is Thiamine-phosphate synthase (218 aa).

4-amino-2-methyl-5-(diphosphooxymethyl)pyrimidine-binding positions include 36 to 40 (QVRSK) and aspartate 70. Positions 71 and 94 each coordinate Mg(2+). Threonine 113 is a 4-amino-2-methyl-5-(diphosphooxymethyl)pyrimidine binding site. Position 141 to 143 (141 to 143 (TPT)) interacts with 2-[(2R,5Z)-2-carboxy-4-methylthiazol-5(2H)-ylidene]ethyl phosphate. Lysine 144 contributes to the 4-amino-2-methyl-5-(diphosphooxymethyl)pyrimidine binding site.

Belongs to the thiamine-phosphate synthase family. Requires Mg(2+) as cofactor.

It carries out the reaction 2-[(2R,5Z)-2-carboxy-4-methylthiazol-5(2H)-ylidene]ethyl phosphate + 4-amino-2-methyl-5-(diphosphooxymethyl)pyrimidine + 2 H(+) = thiamine phosphate + CO2 + diphosphate. It catalyses the reaction 2-(2-carboxy-4-methylthiazol-5-yl)ethyl phosphate + 4-amino-2-methyl-5-(diphosphooxymethyl)pyrimidine + 2 H(+) = thiamine phosphate + CO2 + diphosphate. The catalysed reaction is 4-methyl-5-(2-phosphooxyethyl)-thiazole + 4-amino-2-methyl-5-(diphosphooxymethyl)pyrimidine + H(+) = thiamine phosphate + diphosphate. It participates in cofactor biosynthesis; thiamine diphosphate biosynthesis; thiamine phosphate from 4-amino-2-methyl-5-diphosphomethylpyrimidine and 4-methyl-5-(2-phosphoethyl)-thiazole: step 1/1. Functionally, condenses 4-methyl-5-(beta-hydroxyethyl)thiazole monophosphate (THZ-P) and 2-methyl-4-amino-5-hydroxymethyl pyrimidine pyrophosphate (HMP-PP) to form thiamine monophosphate (TMP). The protein is Thiamine-phosphate synthase of Corynebacterium jeikeium (strain K411).